Consider the following 569-residue polypeptide: Myotubularin-related protein 9 (569 aa).

The Myotubularin phosphatase domain occupies 134-513; that stretch reads GWSAFDLEQE…QCIKIWDRLF (380 aa).

Belongs to the protein-tyrosine phosphatase family. Non-receptor class myotubularin subfamily. Heterodimer with lipid phosphatase mtm-6.

It is found in the cytoplasm. The protein localises to the membrane. Functionally, may act as a regulatory subunit for mtm-6. In association with phosphatase mtm-6, plays a role in endosome trafficking probably by regulating phosphatidylinositol-3-phosphate levels. Regulates fluid phase endocytosis in coelomocytes. Regulates posterior migration of QL neuroblast descendants and the anterior migration of QR neuroblast descendants and HSN neurons during larval development probably by controlling Wnt ligand secretion through the regulation of sorting receptor mig-14 trafficking. Involved in the formation of correct synapse number in DA9 motor neurons. The protein is Myotubularin-related protein 9 of Caenorhabditis elegans.